The sequence spans 359 residues: Phosphoribosylformylglycinamidine cyclo-ligase (359 aa).

This sequence belongs to the AIR synthase family.

It localises to the cytoplasm. It carries out the reaction 2-formamido-N(1)-(5-O-phospho-beta-D-ribosyl)acetamidine + ATP = 5-amino-1-(5-phospho-beta-D-ribosyl)imidazole + ADP + phosphate + H(+). Its pathway is purine metabolism; IMP biosynthesis via de novo pathway; 5-amino-1-(5-phospho-D-ribosyl)imidazole from N(2)-formyl-N(1)-(5-phospho-D-ribosyl)glycinamide: step 2/2. The chain is Phosphoribosylformylglycinamidine cyclo-ligase from Brucella melitensis biotype 2 (strain ATCC 23457).